The primary structure comprises 838 residues: Translation initiation factor IF-2 (838 aa).

The interval V50–S108 is disordered. Residues K54–K65 are compositionally biased toward basic and acidic residues. The span at Q66–P81 shows a compositional bias: polar residues. A tr-type G domain is found at S337–K506. The segment at G346–T353 is G1. GTP is bound at residue G346–T353. The interval G371 to H375 is G2. The interval D392 to G395 is G3. GTP-binding positions include D392–H396 and N446–D449. A G4 region spans residues N446–D449. The G5 stretch occupies residues S482 to K484.

It belongs to the TRAFAC class translation factor GTPase superfamily. Classic translation factor GTPase family. IF-2 subfamily.

The protein localises to the cytoplasm. One of the essential components for the initiation of protein synthesis. Protects formylmethionyl-tRNA from spontaneous hydrolysis and promotes its binding to the 30S ribosomal subunits. Also involved in the hydrolysis of GTP during the formation of the 70S ribosomal complex. The protein is Translation initiation factor IF-2 of Campylobacter fetus subsp. fetus (strain 82-40).